Here is a 1575-residue protein sequence, read N- to C-terminus: Ras GTPase-activating-like protein IQGAP2 (1575 aa).

A Phosphoserine modification is found at S16. In terms of domain architecture, Calponin-homology (CH) spans 41-156 (LCHLEEAKRW…YCIHALSLYL (116 aa)). Phosphothreonine is present on T356. A WW domain is found at 594-627 (VSSDGSWLKLNLHKKYDYYYNTDSKESSWVTPES). Phosphoserine is present on residues S595, S599, and S685. 3 IQ domains span residues 690–719 (QEENVVKIQAFWKGYKQRKEYMHRRQTFID), 720–749 (NTDSIVKIQSWFRMATARKSYLSRLQYFRD), and 750–779 (HNNEIVKIQSLLRANKARDDYKTLVGSENP). Residue T716 is modified to Phosphothreonine. Residues T782, T881, T1002, and T1269 each carry the phosphothreonine modification. The Ras-GAP domain occupies 933-1182 (YLLLKLFKTA…QEFRKYFKEA (250 aa)). Phosphoserine is present on residues S1271, S1279, S1358, and S1461.

Isoform 2 expression is enhanced in testis.

Binds to activated CDC42 and RAC1 but does not seem to stimulate their GTPase activity. Associates with calmodulin. This Homo sapiens (Human) protein is Ras GTPase-activating-like protein IQGAP2 (IQGAP2).